Consider the following 403-residue polypeptide: Dual-specificity RNA methyltransferase RlmN (403 aa).

Glu-126 serves as the catalytic Proton acceptor. A Radical SAM core domain is found at 132 to 375 (ETDRGTLCVS…VRTPRGRDIL (244 aa)). Cys-139 and Cys-378 are disulfide-bonded. The [4Fe-4S] cluster site is built by Cys-146, Cys-150, and Cys-153. Residues 204–205 (GE), Ser-236, 258–260 (SLH), and Asn-335 each bind S-adenosyl-L-methionine. The active-site S-methylcysteine intermediate is the Cys-378.

Belongs to the radical SAM superfamily. RlmN family. [4Fe-4S] cluster is required as a cofactor.

The protein resides in the cytoplasm. The catalysed reaction is adenosine(2503) in 23S rRNA + 2 reduced [2Fe-2S]-[ferredoxin] + 2 S-adenosyl-L-methionine = 2-methyladenosine(2503) in 23S rRNA + 5'-deoxyadenosine + L-methionine + 2 oxidized [2Fe-2S]-[ferredoxin] + S-adenosyl-L-homocysteine. The enzyme catalyses adenosine(37) in tRNA + 2 reduced [2Fe-2S]-[ferredoxin] + 2 S-adenosyl-L-methionine = 2-methyladenosine(37) in tRNA + 5'-deoxyadenosine + L-methionine + 2 oxidized [2Fe-2S]-[ferredoxin] + S-adenosyl-L-homocysteine. Specifically methylates position 2 of adenine 2503 in 23S rRNA and position 2 of adenine 37 in tRNAs. m2A2503 modification seems to play a crucial role in the proofreading step occurring at the peptidyl transferase center and thus would serve to optimize ribosomal fidelity. The chain is Dual-specificity RNA methyltransferase RlmN from Bradyrhizobium sp. (strain ORS 278).